The sequence spans 416 residues: Probable histone-binding protein lin-53 (416 aa).

WD repeat units follow at residues 118 to 158, 170 to 210, 220 to 260, 263 to 303, 307 to 347, and 364 to 404; these read NHEG…SVPK, GHTK…GANG, GHES…PGHA, AHSA…LKLH, SHRD…EDQT, and GHTA…YNDV.

The protein belongs to the WD repeat RBAP46/RBAP48/MSI1 family. Binds directly to helix 1 of the histone fold of histone H4, a region that is not accessible when H4 is in chromatin. Probable component of a NuRD-like complex, composed of at least lin-53 and hda-1. Interacts with lin-35. Interacts with hda-1; the interaction is direct. Component of the DRM complex, at least composed of lin-9, lin-35, lin-37, lin-52, lin-53, lin-54- dpl-1 and efl-1. Interacts with hcp-3.

It localises to the nucleus. It is found in the chromosome. The protein localises to the centromere. In terms of biological role, core histone-binding subunit that may target chromatin assembly factors, chromatin remodeling factors and histone deacetylases to their histone substrates in a manner that is regulated by nucleosomal DNA. Required for hcp-3 and his-1 stabilization, localization of hcp-3 to centromeres and for proper chromosome segregation. Synthetic multivulva class B (synMuvB) protein. SynMuvB proteins are required to repress the induction of vulval development by Ras signaling and probably act by forming the multiprotein DRM complex that represses transcription. The protein is Probable histone-binding protein lin-53 of Caenorhabditis briggsae.